The following is a 151-amino-acid chain: Spore coat polysaccharide biosynthesis protein SpsL (151 aa).

The protein to dTDP-4-dehydrorhamnose reductase.

The protein operates within spore coat biogenesis; spore coat polysaccharide biosynthesis. This chain is Spore coat polysaccharide biosynthesis protein SpsL (spsL), found in Bacillus subtilis (strain 168).